A 396-amino-acid chain; its full sequence is Putative cystathionine beta-lyase (396 aa).

K210 is modified (N6-(pyridoxal phosphate)lysine).

The protein belongs to the trans-sulfuration enzymes family. Requires pyridoxal 5'-phosphate as cofactor.

It carries out the reaction L,L-cystathionine + H2O = L-homocysteine + pyruvate + NH4(+). The catalysed reaction is an S-substituted L-cysteine + H2O = a thiol + pyruvate + NH4(+). Its pathway is amino-acid biosynthesis; L-methionine biosynthesis via de novo pathway; L-homocysteine from L-cystathionine: step 1/1. Its function is as follows. Catalyzes the cleavage of cystathionine to homocysteine, pyruvate and ammonia during methionine biosynthesis. The chain is Putative cystathionine beta-lyase (metC) from Rhizobium johnstonii (strain DSM 114642 / LMG 32736 / 3841) (Rhizobium leguminosarum bv. viciae).